The chain runs to 514 residues: Antiseptic resistance protein (514 aa).

Topologically, residues 1–23 (MISFFTKTTDMMTSKKRWTALVV) are cytoplasmic. A helical transmembrane segment spans residues 24 to 41 (LAVSLFVVTMDMTILIMA). Topologically, residues 42–57 (LPELVRELEPSGTQQL) are extracellular. The helical transmembrane segment at 58-75 (WIVDIYSLVLAGFIIPLS) threads the bilayer. Residues 76–86 (AFADKWGRKKA) are Cytoplasmic-facing. A helical transmembrane segment spans residues 87 to 104 (LLTGFALFGLVSLAIFFA). Residues 105-112 (ESAEFVIA) lie on the Extracellular side of the membrane. A helical transmembrane segment spans residues 113 to 130 (IRFLLGIAGALIMPTTLS). At 131–146 (MIRVIFENPKERATAL) the chain is on the cytoplasmic side. Residues 147-164 (AVWSIASSIGAVFGPIIG) form a helical membrane-spanning segment. Residues 165-172 (GALLEQFS) are Extracellular-facing. Residues 173 to 190 (WHSAFLINVPFAIIAVVA) traverse the membrane as a helical segment. The Cytoplasmic portion of the chain corresponds to 191-207 (GLFLLPESKLSKEKSHS). The chain crosses the membrane as a helical span at residues 208-225 (WDIPSTILSIAGMIGLVW). Residues 226 to 237 (SIKEFSKEGLAD) are Extracellular-facing. A helical transmembrane segment spans residues 238 to 255 (IIPWVVIVLAITMIVIFV). Over 256–278 (KRNLSSSDPMLDVRLFKKRSFSA) the chain is Cytoplasmic. The chain crosses the membrane as a helical span at residues 279–295 (GTIAAFMTMFAMASVLL). Residues 296–315 (LASQWLQVVEELSPFKAGLY) lie on the Extracellular side of the membrane. Residues 316 to 333 (LLPMAIGDMVFAPIAPGL) form a helical membrane-spanning segment. Over 334–341 (AARFGPKI) the chain is Cytoplasmic. The helical transmembrane segment at 342–360 (VLPSGIGIAAIGMFIMYFF) threads the bilayer. Over 361 to 369 (GHPLSYSTM) the chain is Extracellular. The chain crosses the membrane as a helical span at residues 370-387 (ALALILVGAGMASLAVAS). Residues 388-408 (ALIMLETPTSKAGNAAAVEES) are Cytoplasmic-facing. Residues 409-426 (MYDLGNVFGVAVLGSLSS) form a helical membrane-spanning segment. The Extracellular portion of the chain corresponds to 427 to 481 (MLYRVFLDISSFSSKGIVGDLAHVAEESVVGAVEVAKATGIKQLANEAVTSFNDA). The helical transmembrane segment at 482–499 (FVATALVGGIIMIIISIV) threads the bilayer. The Cytoplasmic portion of the chain corresponds to 500–514 (VYLLIPKSLDITKQK).

Belongs to the major facilitator superfamily.

It is found in the cell membrane. In terms of biological role, confers export-mediated resistance against antiseptic and disinfectant compounds such as intercalating dyes, quaternary ammonium salts and diamidines. This Staphylococcus aureus (strain Mu50 / ATCC 700699) protein is Antiseptic resistance protein (qacA).